The sequence spans 170 residues: Cathelicidin antimicrobial peptide (170 aa).

The N-terminal stretch at 1 to 30 (MKTQRDSPSLGRWSLVLLLLGLVMPLAIVA) is a signal peptide. A propeptide spans 31 to 131 (QVLSYQEAVL…DISCDKDNRR (101 aa)) (cathelin-like domain (CLD)). Intrachain disulfides connect C86-C97 and C108-C125. The segment at 150–162 (LKKVGQKIKDFLG) is active core.

Belongs to the cathelicidin family. Monomer, homodimer or homotrimer (in vitro). Oligomerizes as tetra- or hexamer in solution (in vitro). Proteolytically cleaved by proteinase PRTN3 into antibacterial peptide LL-37. Proteolytically cleaved by cathepsin CTSG and neutrophil elastase ELANE. In terms of processing, resistant to proteolytic degradation in solution, and when bound to both zwitterionic (mimicking mammalian membranes) and negatively charged membranes (mimicking bacterial membranes). Post-translationally, after secretion onto the skin surface, the CAMP gene product is processed by a serine protease-dependent mechanism into multiple novel antimicrobial peptides distinct from and shorter than cathelicidin LL-37. These peptides show enhanced antimicrobial action, acquiring the ability to kill skin pathogens such as S.aureus, E.coli and C.albicans. These peptides have lost the ability to stimulate CXCL8/IL8 release from keratinocytes. The peptides act synergistically, killing bacteria at lower concentrations when present together, and maintain activity at increased salt condition.

The protein localises to the secreted. It localises to the vesicle. In terms of biological role, antimicrobial protein that is an integral component of the innate immune system. Binds to bacterial lipopolysaccharides (LPS). Acts via neutrophil N-formyl peptide receptors to enhance the release of CXCL2. Postsecretory processing generates multiple cathelicidin antimicrobial peptides with various lengths which act as a topical antimicrobial defense in sweat on skin. The unprocessed precursor form, cathelicidin antimicrobial peptide, inhibits the growth of Gram-negative E.coli and E.aerogenes with efficiencies comparable to that of the mature peptide LL-37 (in vitro). Antimicrobial peptide that is an integral component of the innate immune system. Binds to bacterial lipopolysaccharides (LPS). Causes membrane permeabilization by forming transmembrane pores (in vitro). Causes lysis of E.coli. Exhibits antimicrobial activity against Gram-negative bacteria such as P.aeruginosa, S.typhimurium, E.aerogenes, E.coli and P.syringae, Gram-positive bacteria such as L.monocytogenes, S.epidermidis, S.pyogenes and S.aureus, as well as vancomycin-resistant enterococci (in vitro). Exhibits antimicrobial activity against methicillin-resistant S.aureus, P.mirabilis, and C.albicans in low-salt media, but not in media containing 100 mM NaCl (in vitro). Forms chiral supramolecular assemblies with quinolone signal (PQS) molecules of P.aeruginosa, which may lead to interference of bacterial quorum signaling and perturbance of bacterial biofilm formation. May form supramolecular fiber-like assemblies on bacterial membranes. Induces cytokine and chemokine producation as well as TNF/TNFA and CSF2/GMCSF production in normal human keratinocytes. Exhibits hemolytic activity against red blood cells. Functionally, exhibits antimicrobial activity against E.coli and B.megaterium (in vitro). In Macaca fascicularis (Crab-eating macaque), this protein is Cathelicidin antimicrobial peptide.